The primary structure comprises 412 residues: Intraflagellar transport protein che-13 (412 aa).

2 disordered regions span residues 1-21 (MEEEHEEESHLSQSDTVGSAI) and 162-193 (PPKEEDEDTAVDEQDEDDDNDDIVEEPMNFLD). Positions 165–193 (EEDEDTAVDEQDEDDDNDDIVEEPMNFLD) are enriched in acidic residues. The stretch at 302 to 393 (QLASMMSKFR…VQIGVFEQSI (92 aa)) forms a coiled coil.

It belongs to the IFT57 family. In terms of assembly, component of the IFT complex B composed of at least che-2, che-13, dyf-1, dyf-3, dyf-6, dyf-11, dyf-13, ift-20, ift-74, ift-81, ifta-2, osm-1, osm-5 and osm-6.

It localises to the cytoplasm. The protein resides in the cytoskeleton. It is found in the cilium axoneme. In terms of biological role, component of the intraflagellar transport (IFT) complex B required for transport of proteins in the motile cilium. May be required for ciliary entrance and transport of specific ciliary cargo proteins such as che-3 which are related to motility. Required for the formation of chemosensory cilia that detect chemosensory cues. The protein is Intraflagellar transport protein che-13 of Caenorhabditis elegans.